A 1383-amino-acid chain; its full sequence is Insulin receptor (1383 aa).

The first 26 residues, 1–26 (MGSGRGCETTAVPLLMAVAVAGGTAG), serve as a signal peptide directing secretion. Extracellular loops occupy residues 27 to 759 (HLYP…TRPS) and 764 to 957 (SLEE…NIAK). Cys34 and Cys52 are disulfide-bonded. Residues Asn42, Asn51, Asn104, and Asn137 are each glycosylated (N-linked (GlcNAc...) asparagine). 9 disulfides stabilise this stretch: Cys152–Cys181, Cys185–Cys208, Cys195–Cys214, Cys218–Cys227, Cys222–Cys233, Cys234–Cys242, Cys238–Cys251, Cys254–Cys263, and Cys267–Cys279. Asn241 carries an N-linked (GlcNAc...) asparagine glycan. Residue Asn281 is glycosylated (N-linked (GlcNAc...) asparagine). Intrachain disulfides connect Cys285–Cys310, Cys292–Cys300, Cys314–Cys327, Cys330–Cys334, and Cys338–Cys359. Residue Asn321 is glycosylated (N-linked (GlcNAc...) asparagine). A glycan (N-linked (GlcNAc...) asparagine) is linked at Asn363. Ser399 carries the phosphoserine modification. Tyr400 carries the phosphotyrosine modification. Ser406 carries the phosphoserine modification. Residues Asn423 and Asn444 are each glycosylated (N-linked (GlcNAc...) asparagine). Cysteines 461 and 494 form a disulfide. 4 N-linked (GlcNAc...) asparagine glycosylation sites follow: Asn540, Asn634, Asn652, and Asn699. Positions 625 to 727 (VPLDPISVSN…SQILKELEES (103 aa)) constitute a Fibronectin type-III 1 domain. The cysteines at positions 675 and 900 are disulfide-linked. Residues 687-709 (SPPFESDDSQKHNQSEYDDSASE) are disordered. The tract at residues 734 to 742 (EDYLHNVVF) is insulin-binding. Positions 747 to 783 (TSSGNGAEDTRPSRKRRSLEEVGNVTATTPTLPDFPN) are disordered. 2 Fibronectin type-III domains span residues 754-848 (EDTR…TMPE) and 854-948 (IVGP…VTDY). N-linked (GlcNAc...) asparagine glycosylation is found at Asn770, Asn783, Asn921, and Asn934. A compositionally biased stretch (polar residues) spans 771-783 (VTATTPTLPDFPN). Residues 958–978 (IIIGPLIFVFLFSVVIGSIYL) traverse the membrane as a helical segment. The Cytoplasmic portion of the chain corresponds to 979–1383 (FLRKRQPDGP…VLTLPRSNPS (405 aa)). Residues 997–1000 (NPEY) are important for interaction with IRS1, SHC1 and STAT5B. Position 1000 is a phosphotyrosine; by autocatalysis (Tyr1000). Residues 1024 to 1299 (ITLLRELGQG…LLKDDLHPSF (276 aa)) form the Protein kinase domain. The ATP site is built by Ser1034 and Lys1058. Lys1080 is covalently cross-linked (Glycyl lysine isopeptide (Lys-Gly) (interchain with G-Cter in ubiquitin)). Position 1084 is an S-nitrosocysteine (Cys1084). An ATP-binding site is contributed by 1105–1111 (ELMAHGD). Asp1160 acts as the Proton donor/acceptor in catalysis. ATP-binding positions include 1164 to 1165 (RN) and Asp1178. Tyr1186, Tyr1190, Tyr1191, Tyr1356, and Tyr1362 each carry phosphotyrosine; by autocatalysis. The interval 1361–1383 (PYTHMNGGKKNGRVLTLPRSNPS) is disordered. The interval 1362–1365 (YTHM) is PIK3R1 binding.

The protein belongs to the protein kinase superfamily. Tyr protein kinase family. Insulin receptor subfamily. In terms of assembly, tetramer of 2 alpha and 2 beta chains linked by disulfide bonds. The alpha chains carry the insulin-binding regions, while the beta chains carry the kinase domain. Forms a hybrid receptor with IGF1R, the hybrid is a tetramer consisting of 1 alpha chain and 1 beta chain of INSR and 1 alpha chain and 1 beta chain of IGF1R. Interacts with SORBS1 but dissociates from it following insulin stimulation. Binds SH2B2. Activated form of INSR interacts (via Tyr-1000) with the PTB/PID domains of IRS1 and SHC1. The sequences surrounding the phosphorylated NPXY motif contribute differentially to either IRS1 or SHC1 recognition. Interacts (via tyrosines in the C-terminus) with IRS2 (via PTB domain and 591-786 AA); the 591-786 would be the primary anchor of IRS2 to INSR while the PTB domain would have a stabilizing action on the interaction with INSR. Interacts with the SH2 domains of the 85 kDa regulatory subunit of PI3K (PIK3R1) in vitro, when autophosphorylated on tyrosine residues. Interacts with SOCS7. Interacts (via the phosphorylated Tyr-1000), with SOCS3. Interacts (via the phosphorylated Tyr-1186, Tyr-1190, Tyr-1191) with SOCS1. Interacts with ARRB2. Interacts with GRB10; this interaction blocks the association between IRS1/IRS2 and INSR, significantly reduces insulin-stimulated tyrosine phosphorylation of IRS1 and IRS2 and thus decreases insulin signaling. Interacts with PDPK1. Interacts (via Tyr-1191) with GRB14 (via BPS domain); this interaction protects the tyrosines in the activation loop from dephosphorylation, but promotes dephosphorylation of Tyr-1000, this results in decreased interaction with, and phosphorylation of, IRS1. Interacts (via subunit alpha) with ENPP1 (via 485-599 AA); this interaction blocks autophosphorylation. Interacts with PTPRE; this interaction is dependent of Tyr-1186, Tyr-1190 and Tyr-1191 of the INSR. Interacts with STAT5B (via SH2 domain). Interacts with PTPRF. Interacts with GRB7. Interacts with CAV2 (tyrosine-phosphorylated form); the interaction is increased with 'Tyr-27'phosphorylation of CAV2. Interacts with ATIC; ATIC together with PRKAA2/AMPK2 and HACD3/PTPLAD1 is proposed to be part of a signaling netwok regulating INSR autophosphorylation and endocytosis. Interacts with the insulin receptor SORL1; this interaction strongly increases its surface exposure, hence strengthens insulin signal reception. Interacts (tyrosine phosphorylated) with CCDC88A/GIV (via SH2-like region); binding requires autophosphorylation of the Insr C-terminal region. Interacts with GNAI3; the interaction is probably mediated by CCDC88A/GIV. Interacts with LMBRD1. Interacts (in response to insulin stimulation) with NCK1; this interaction may recruit PTPN1 to mediate INSR dephosphorylation. Interacts with CD248; this interaction diminishes INSR autophosphorylation. Post-translationally, after being transported from the endoplasmic reticulum to the Golgi apparatus, the single glycosylated precursor is further glycosylated and then cleaved, followed by its transport to the plasma membrane. Autophosphorylated on tyrosine residues in response to insulin. Phosphorylation of Tyr-1000 is required for binding to IRS1, SHC1 and STAT5B. May also be phosphorylated at Tyr-1186 and Tyr-1191 by mTORC2. Dephosphorylated by PTPRE at Tyr-1000, Tyr-1186, Tyr-1190 and Tyr-1191. Dephosphorylated by PTPRF and PTPN1. Dephosphorylated by PTPN2; down-regulates insulin-induced signaling. In terms of processing, S-nitrosylation at Cys-1084 by BLVRB inhibits the receptor tyrosine kinase, thereby inhibiting insulin signaling. Post-translationally, ubiquitinated by MARCHF1; leading to degradation thereby reducing surface INSR expression.

Its subcellular location is the cell membrane. It localises to the late endosome. The protein localises to the lysosome. It catalyses the reaction L-tyrosyl-[protein] + ATP = O-phospho-L-tyrosyl-[protein] + ADP + H(+). With respect to regulation, activated in response to insulin. Autophosphorylation activates the kinase activity. PTPN1, PTPRE and PTPRF dephosphorylate important tyrosine residues, thereby reducing INSR activity. Inhibited by ENPP1. GRB10 and GRB14 inhibit the catalytic activity of the INSR, they block access of substrates to the activated receptor. SOCS1 and SOCS3 act as negative regulators of INSR activity, they bind to the activated INRS and interfere with the phosphorylation of INSR substrates. Receptor tyrosine kinase which mediates the pleiotropic actions of insulin. Binding of insulin leads to phosphorylation of several intracellular substrates, including, insulin receptor substrates (IRS1, 2, 3, 4), SHC, GAB1, CBL and other signaling intermediates. Each of these phosphorylated proteins serve as docking proteins for other signaling proteins that contain Src-homology-2 domains (SH2 domain) that specifically recognize different phosphotyrosine residues, including the p85 regulatory subunit of PI3K and SHP2. Phosphorylation of IRSs proteins lead to the activation of two main signaling pathways: the PI3K-AKT/PKB pathway, which is responsible for most of the metabolic actions of insulin, and the Ras-MAPK pathway, which regulates expression of some genes and cooperates with the PI3K pathway to control cell growth and differentiation. Binding of the SH2 domains of PI3K to phosphotyrosines on IRS1 leads to the activation of PI3K and the generation of phosphatidylinositol-(3, 4, 5)-triphosphate (PIP3), a lipid second messenger, which activates several PIP3-dependent serine/threonine kinases, such as PDPK1 and subsequently AKT/PKB. The net effect of this pathway is to produce a translocation of the glucose transporter SLC2A4/GLUT4 from cytoplasmic vesicles to the cell membrane to facilitate glucose transport. Moreover, upon insulin stimulation, activated AKT/PKB is responsible for: anti-apoptotic effect of insulin by inducing phosphorylation of BAD; regulates the expression of gluconeogenic and lipogenic enzymes by controlling the activity of the winged helix or forkhead (FOX) class of transcription factors. Another pathway regulated by PI3K-AKT/PKB activation is mTORC1 signaling pathway which regulates cell growth and metabolism and integrates signals from insulin. AKT mediates insulin-stimulated protein synthesis by phosphorylating TSC2 thereby activating mTORC1 pathway. The Ras/RAF/MAP2K/MAPK pathway is mainly involved in mediating cell growth, survival and cellular differentiation of insulin. Phosphorylated IRS1 recruits GRB2/SOS complex, which triggers the activation of the Ras/RAF/MAP2K/MAPK pathway. In addition to binding insulin, the insulin receptor can bind insulin-like growth factors (IGFI and IGFII). When present in a hybrid receptor with IGF1R, binds IGF1. In adipocytes, inhibits lipolysis. The sequence is that of Insulin receptor (Insr) from Rattus norvegicus (Rat).